The following is a 63-amino-acid chain: Beta-defensin 38 (63 aa).

The first 21 residues, 1–21, serve as a signal peptide directing secretion; the sequence is MKISCFLLLVLSLYLFQVNQA. 3 disulfides stabilise this stretch: C29–C58, C36–C51, and C41–C59.

This sequence belongs to the beta-defensin family.

The protein resides in the secreted. Functionally, has antibacterial activity. The sequence is that of Beta-defensin 38 (Defb38) from Rattus norvegicus (Rat).